We begin with the raw amino-acid sequence, 439 residues long: MQSYFDELEQVRYEGSQNTNPLAFHHYNPDEIILGKRMADHLRFAACYWHTFCWGGADMFGSNAFERPWQQSGDALALAKRKADVAFEFFHKLNVPYYCFHDVDVSPEGASLKEYLNNFAVMTDVLAEKQASSGVKLLWGTANCFTHPRYGAGAATNPDPEVFSWAATQVFTAMNATQKLGGENYVLWGGREGYETLLNTDLRQEREQIGRFMQMVVEHKHKTGFQGTLLIEPKPQEPTKHQYDYDVATVYGFLKQFGLEKEIKVNIEANHATLAGHSFHHEIASAIALGIFGSVDANRGDPQLGWDTDQFPNSVEENALVMFEILKAGGFTTGGLNFDAKVRRQSTDKYDLFYGHIGAMDTMALALKIAAKMIEDGQLDKQVAERYAGWSSDLGQQILKGKMSLEDLASYAEQHNLNPHHQSGHQELLENRVNRYIFG.

Active-site residues include H101 and D104. The Mg(2+) site is built by E232, E268, H271, D296, D307, D309, and D339.

It belongs to the xylose isomerase family. As to quaternary structure, homotetramer. Mg(2+) is required as a cofactor.

Its subcellular location is the cytoplasm. It carries out the reaction alpha-D-xylose = alpha-D-xylulofuranose. This chain is Xylose isomerase, found in Yersinia enterocolitica serotype O:8 / biotype 1B (strain NCTC 13174 / 8081).